The chain runs to 355 residues: 45 kDa calcium-binding protein (355 aa).

Positions 1-29 are cleaved as a signal peptide; the sequence is MASRQAPLCGLAPCCLWLLGVVLLMNASA. A glycan (N-linked (GlcNAc...) asparagine) is linked at asparagine 33. EF-hand domains follow at residues 91–126 and 130–165; these read KSRR…KTAE and EAVA…TKGH. Serine 92 is subject to Phosphoserine. Residues aspartate 104, asparagine 106, aspartate 108, arginine 110, glutamate 115, aspartate 143, aspartate 145, aspartate 147, histidine 149, and glutamate 154 each contribute to the Ca(2+) site. A phosphothreonine mark is found at threonine 186 and threonine 210. EF-hand domains are found at residues 226 to 261, 271 to 306, and 307 to 342; these read MLQF…TVEN, WVRD…MNEF, and SALN…FTGS. Ca(2+) is bound by residues aspartate 239, aspartate 241, aspartate 243, lysine 245, and glutamate 250. Threonine 258 is modified (phosphothreonine). Ca(2+) contacts are provided by aspartate 284, asparagine 286, and aspartate 288. At threonine 292 the chain carries Phosphothreonine. Residues glutamate 295, aspartate 320, asparagine 322, asparagine 324, tyrosine 326, and glutamate 331 each coordinate Ca(2+). A necessary for intracellular retention in Golgi apparatus lumen region spans residues 302-355; the sequence is PMNEFSALNEAKQMIAIADENQNHYLEPEEVLKYSEFFTGSKLVDYARSVHEEF.

The protein belongs to the CREC family.

Its subcellular location is the golgi apparatus lumen. Functionally, may regulate calcium-dependent activities in the endoplasmic reticulum lumen or post-ER compartment. The protein is 45 kDa calcium-binding protein (SDF4) of Bos taurus (Bovine).